A 142-amino-acid polypeptide reads, in one-letter code: Small ribosomal subunit protein uS12 (142 aa).

Belongs to the universal ribosomal protein uS12 family. Part of the 30S ribosomal subunit.

In terms of biological role, with S4 and S5 plays an important role in translational accuracy. Located at the interface of the 30S and 50S subunits. The sequence is that of Small ribosomal subunit protein uS12 from Thermoplasma acidophilum (strain ATCC 25905 / DSM 1728 / JCM 9062 / NBRC 15155 / AMRC-C165).